Consider the following 120-residue polypeptide: UPF0231 protein Spro_4007 (120 aa).

Belongs to the UPF0231 family.

The polypeptide is UPF0231 protein Spro_4007 (Serratia proteamaculans (strain 568)).